Here is a 429-residue protein sequence, read N- to C-terminus: Histidine--tRNA ligase (429 aa).

This sequence belongs to the class-II aminoacyl-tRNA synthetase family. Homodimer.

The protein localises to the cytoplasm. It carries out the reaction tRNA(His) + L-histidine + ATP = L-histidyl-tRNA(His) + AMP + diphosphate + H(+). In Pelodictyon phaeoclathratiforme (strain DSM 5477 / BU-1), this protein is Histidine--tRNA ligase.